Consider the following 682-residue polypeptide: Pneumocandin biosynthesis cluster protein B (682 aa).

Positions 63-73 (SSLSSTEVTSS) are enriched in low complexity. Disordered regions lie at residues 63–86 (SSLS…DAPE), 107–129 (QNTP…DTNQ), and 251–358 (SEST…SPAN). 2 stretches are compositionally biased toward polar residues: residues 257–279 (NTGS…SHSS) and 310–320 (PRQTTEATPCD). The span at 335 to 349 (PERRSMKMVRKEARD) shows a compositional bias: basic and acidic residues.

Part of the gene cluster that mediates the biosynthesis of pneumocandins, lipohexapeptides of the echinocandin family that prevent fungal cell wall formation by non-competitive inhibition of beta-1,3-glucan synthase. The 10,12-dimethylmyristoyl side chain is synthesized by the reducing polyketide synthase gloL/GLPKS4. The thioesterase gloN/GLHYD exclusively interacts with gloL/GLPKS4 to maintain turnover of the polyketide side chain. The 10R,12S-dimethylmyristic acid is then transferred to the first thiolation domain of the nonribosomal peptide synthetase gloA/GLNRPS4 by the acyl-AMP ligase gloD/GLligase, followed by its acylation to L-ornithine to trigger elongation of the cyclic hexapeptide. L-ornithine, 4R-hydroxyl-L-proline (generated from L-proline by the dioxygenase gloF/GLOXY2), 3S-hydroxyl-L-homotyrosine (generated by gloG/GLHtyB, gloH/GLHtyA, gloI/GLHtyC, gloJ/GLHtyD and hydroxylated at C-3 by the dioxygenase gloM/GLOXY1), 3R-hydroxyl-L-glutamine (generated from L-glutamine probably by the dioxygenase gloE/GLOXY3) and 3S-hydroxyl-L-proline (generated from L-proline by the dioxygenase gloF/GLOXY2 to yield pneumocandin B0), or 3S-hydroxyl-4S-methyl-L-proline (generated from L-leucine by the dioxygenase gloC/GLOXY4 to yield pneumocandin A0) are sequentially added to the growing chain. The last C domain of gloA/GLNRPS4 is proposed to be responsible for cyclization by condensation to form the peptide bond between L-ornithine and 3S-hydroxyl-4S-methyl-L-proline (for pneumocandin A0) or 3S-hydroxyl-L-proline (for pneumocandin B0). Finally, the subsequent C-4 hydroxylation of 3S-hydroxyl-L-homotyrosine and L-ornithine dihydroxylation at C-4 and C-5 are performed by the cytochrome P450 monooxygenases gloP/GLP450-1 and gloO/GLP450-2, respectively. The sequence is that of Pneumocandin biosynthesis cluster protein B from Glarea lozoyensis (strain ATCC 20868 / MF5171).